We begin with the raw amino-acid sequence, 153 residues long: Glycosylation-dependent cell adhesion molecule 1 (153 aa).

The first 18 residues, 1–18 (MKFLCVLLLASLAATSLA), serve as a signal peptide directing secretion. Thr34 is a glycosylation site (O-linked (GalNAc...) threonine; partial). Residues Ser47, Ser52, Ser56, Ser58, and Ser64 each carry the phosphoserine modification. O-linked (HexNAc...) serine glycosylation is present at Ser78. The N-linked (GlcNAc...) asparagine glycan is linked to Asn95. The disordered stretch occupies residues 95–115 (NATLGSEETTEHTPSDASTTE). O-linked (GalNAc...) threonine glycosylation is present at Thr104.

The protein belongs to the PP3/GlyCAM-1 family. In terms of tissue distribution, highly and specifically expressed in the lactating mammary gland.

It localises to the membrane. This Bos taurus (Bovine) protein is Glycosylation-dependent cell adhesion molecule 1 (GLYCAM1).